Here is a 712-residue protein sequence, read N- to C-terminus: Diacylglycerol kinase 2 (712 aa).

2 Phorbol-ester/DAG-type zinc fingers span residues 72–133 (HHQW…AKDC) and 145–208 (RHHW…GDAC). The DAGKc domain maps to 338–479 (PDARPLLVFI…RWSVKIVEES (142 aa)).

This sequence belongs to the eukaryotic diacylglycerol kinase family. Monomer. In terms of tissue distribution, expressed in rosette and cauline leaves, flowers, siliques and roots. Highly expressed in young leaves and at lower levels in older leaves. In young seedlings, expressed at the root-shoot junction zone and vascular bundles of the cotyledons. In older plants, expressed in root tip, central cylinder, root hair, leaf mesophyll cells and guard cells, sepals, filaments of the anthers, stigma, valves of young and early adult siliques and hilum of seeds.

Its subcellular location is the endoplasmic reticulum. It catalyses the reaction a 1,2-diacyl-sn-glycerol + ATP = a 1,2-diacyl-sn-glycero-3-phosphate + ADP + H(+). It carries out the reaction 1-octadecanoyl-2-(5Z,8Z,11Z,14Z-eicosatetraenoyl)-sn-glycerol + ATP = 1-octadecanoyl-2-(5Z,8Z,11Z,14Z-eicosatetraenoyl)-sn-glycero-3-phosphate + ADP + H(+). The enzyme catalyses 1,2-di-(9Z-octadecenoyl)-sn-glycerol + ATP = 1,2-di-(9Z-octadecenoyl)-sn-glycero-3-phosphate + ADP + H(+). Its function is as follows. Phosphorylates the second messenger diacylglycerol (DAG) to generate phosphatidic acid (PA), another important signaling molecule. PA is required for plant development and responses to abiotic stress and pathogen attack. May be involved in the accumulation of PA during cold stress. Involved in response to freezing stress by modulating the accumulation of PA. Exhibits high specificity for the unsaturated DAG analogs 1-stearoyl-2-arachidonoyl-sn-glycerol (1,2-SAG) and 1,2-dioleoyl-sn-glycerol (1,2-DOG). Exhibits high specificity for 1-palmitoyl, 2-oleoyl-sn-glycerol (1,2 POG), 1-stearoyl, 2-linoleoyl-sn-glycerol (1,2-SLG) and 1-oleoyl, 2-palmitoyl-sn-glycerol (1,2-OPG). Has almost no activity toward 1,2-dioctanoyl-sn-glycerol (1,2-DOCG), 1,2-dipalmitoyl-sn-glycerol (1,2-DPG), 1,2-dimyristoyl-sn-glycerol (1,2-DMG) and 1-oleoyl-2-acetyl-sn-glycerol (1,2-OAG). Functions together with DGK4 in male gametophyte development and biosynthesis of phosphatidylglycerol and phosphatidylinositol in the endoplasmic reticulum (ER). Involved in PA production for pollen grain growth, as well as leaf and root growth. The protein is Diacylglycerol kinase 2 of Arabidopsis thaliana (Mouse-ear cress).